The primary structure comprises 122 residues: Glycine cleavage system H protein (122 aa).

The Lipoyl-binding domain maps to 19 to 101; it reads MVTVGVTHYA…ETEGWLWKMT (83 aa). The residue at position 60 (lysine 60) is an N6-lipoyllysine.

The protein belongs to the GcvH family. The glycine cleavage system is composed of four proteins: P, T, L and H. (R)-lipoate is required as a cofactor.

The glycine cleavage system catalyzes the degradation of glycine. The H protein shuttles the methylamine group of glycine from the P protein to the T protein. The chain is Glycine cleavage system H protein from Bartonella tribocorum (strain CIP 105476 / IBS 506).